The primary structure comprises 497 residues: Probable cytosol aminopeptidase (497 aa).

Mn(2+) contacts are provided by lysine 262 and aspartate 267. Residue lysine 274 is part of the active site. Mn(2+) contacts are provided by aspartate 285, aspartate 344, and glutamate 346. The active site involves arginine 348.

Belongs to the peptidase M17 family. It depends on Mn(2+) as a cofactor.

It is found in the cytoplasm. The enzyme catalyses Release of an N-terminal amino acid, Xaa-|-Yaa-, in which Xaa is preferably Leu, but may be other amino acids including Pro although not Arg or Lys, and Yaa may be Pro. Amino acid amides and methyl esters are also readily hydrolyzed, but rates on arylamides are exceedingly low.. It carries out the reaction Release of an N-terminal amino acid, preferentially leucine, but not glutamic or aspartic acids.. Functionally, presumably involved in the processing and regular turnover of intracellular proteins. Catalyzes the removal of unsubstituted N-terminal amino acids from various peptides. The protein is Probable cytosol aminopeptidase of Rhizobium etli (strain ATCC 51251 / DSM 11541 / JCM 21823 / NBRC 15573 / CFN 42).